Here is a 190-residue protein sequence, read N- to C-terminus: UPF0301 protein DP2218 (190 aa).

The protein belongs to the UPF0301 (AlgH) family.

The polypeptide is UPF0301 protein DP2218 (Desulfotalea psychrophila (strain LSv54 / DSM 12343)).